The following is a 1094-amino-acid chain: Probable arabinosyltransferase C (1094 aa).

Transmembrane regions (helical) follow at residues I28 to L50, A232 to L251, P264 to F286, S341 to S360, T373 to L392, I431 to I453, R466 to F488, S530 to L552, S565 to T582, W586 to V608, T620 to Y642, W657 to F679, and L700 to S722. The span at G817–G831 shows a compositional bias: low complexity. The interval G817 to R836 is disordered.

Belongs to the emb family.

The protein localises to the cell membrane. Its function is as follows. Arabinosyl transferase responsible for the polymerization of arabinose into the arabinan of arabinogalactan. The sequence is that of Probable arabinosyltransferase C (embC) from Mycobacterium bovis (strain ATCC BAA-935 / AF2122/97).